The chain runs to 373 residues: UDP-N-acetylglucosamine--N-acetylmuramyl-(pentapeptide) pyrophosphoryl-undecaprenol N-acetylglucosamine transferase (373 aa).

UDP-N-acetyl-alpha-D-glucosamine is bound by residues 13–15 (TGG), N124, R165, S192, and Q293.

Belongs to the glycosyltransferase 28 family. MurG subfamily.

The protein resides in the cell inner membrane. It carries out the reaction di-trans,octa-cis-undecaprenyl diphospho-N-acetyl-alpha-D-muramoyl-L-alanyl-D-glutamyl-meso-2,6-diaminopimeloyl-D-alanyl-D-alanine + UDP-N-acetyl-alpha-D-glucosamine = di-trans,octa-cis-undecaprenyl diphospho-[N-acetyl-alpha-D-glucosaminyl-(1-&gt;4)]-N-acetyl-alpha-D-muramoyl-L-alanyl-D-glutamyl-meso-2,6-diaminopimeloyl-D-alanyl-D-alanine + UDP + H(+). It participates in cell wall biogenesis; peptidoglycan biosynthesis. In terms of biological role, cell wall formation. Catalyzes the transfer of a GlcNAc subunit on undecaprenyl-pyrophosphoryl-MurNAc-pentapeptide (lipid intermediate I) to form undecaprenyl-pyrophosphoryl-MurNAc-(pentapeptide)GlcNAc (lipid intermediate II). In Sinorhizobium fredii (strain NBRC 101917 / NGR234), this protein is UDP-N-acetylglucosamine--N-acetylmuramyl-(pentapeptide) pyrophosphoryl-undecaprenol N-acetylglucosamine transferase.